The primary structure comprises 170 residues: Peptide deformylase (170 aa).

Fe cation contacts are provided by Cys91 and His133. Glu134 is a catalytic residue. A Fe cation-binding site is contributed by His137.

Belongs to the polypeptide deformylase family. Fe(2+) serves as cofactor.

It carries out the reaction N-terminal N-formyl-L-methionyl-[peptide] + H2O = N-terminal L-methionyl-[peptide] + formate. Functionally, removes the formyl group from the N-terminal Met of newly synthesized proteins. Requires at least a dipeptide for an efficient rate of reaction. N-terminal L-methionine is a prerequisite for activity but the enzyme has broad specificity at other positions. This chain is Peptide deformylase, found in Yersinia pseudotuberculosis serotype O:1b (strain IP 31758).